Consider the following 256-residue polypeptide: Type III pantothenate kinase (256 aa).

Residue 6–13 coordinates ATP; it reads DVGNSHIY. Residues Tyr99 and 106–109 each bind substrate; that span reads GADR. Catalysis depends on Asp108, which acts as the Proton acceptor. Asp129 provides a ligand contact to K(+). Position 132 (Thr132) interacts with ATP. Thr184 is a substrate binding site.

The protein belongs to the type III pantothenate kinase family. Homodimer. Requires NH4(+) as cofactor. It depends on K(+) as a cofactor.

Its subcellular location is the cytoplasm. It carries out the reaction (R)-pantothenate + ATP = (R)-4'-phosphopantothenate + ADP + H(+). Its pathway is cofactor biosynthesis; coenzyme A biosynthesis; CoA from (R)-pantothenate: step 1/5. Functionally, catalyzes the phosphorylation of pantothenate (Pan), the first step in CoA biosynthesis. The sequence is that of Type III pantothenate kinase from Legionella pneumophila (strain Corby).